The sequence spans 289 residues: ADP-polyphosphate phosphotransferase (289 aa).

The protein belongs to the polyphosphate kinase 2 (PPK2) family. Class I subfamily.

The enzyme catalyses [phosphate](n) + ATP = [phosphate](n+1) + ADP. Uses inorganic polyphosphate (polyP) as a donor to convert ADP to ATP. The sequence is that of ADP-polyphosphate phosphotransferase from Rhodopseudomonas palustris (strain ATCC BAA-98 / CGA009).